The sequence spans 351 residues: Nicotinate-nucleotide--dimethylbenzimidazole phosphoribosyltransferase (351 aa).

Glu317 serves as the catalytic Proton acceptor.

The protein belongs to the CobT family.

It catalyses the reaction 5,6-dimethylbenzimidazole + nicotinate beta-D-ribonucleotide = alpha-ribazole 5'-phosphate + nicotinate + H(+). It participates in nucleoside biosynthesis; alpha-ribazole biosynthesis; alpha-ribazole from 5,6-dimethylbenzimidazole: step 1/2. Catalyzes the synthesis of alpha-ribazole-5'-phosphate from nicotinate mononucleotide (NAMN) and 5,6-dimethylbenzimidazole (DMB). In Pseudomonas aeruginosa (strain LESB58), this protein is Nicotinate-nucleotide--dimethylbenzimidazole phosphoribosyltransferase.